Consider the following 109-residue polypeptide: Nucleoid-associated protein LBUL_1514 (109 aa).

The protein belongs to the YbaB/EbfC family. As to quaternary structure, homodimer.

The protein resides in the cytoplasm. It is found in the nucleoid. In terms of biological role, binds to DNA and alters its conformation. May be involved in regulation of gene expression, nucleoid organization and DNA protection. This chain is Nucleoid-associated protein LBUL_1514, found in Lactobacillus delbrueckii subsp. bulgaricus (strain ATCC BAA-365 / Lb-18).